The sequence spans 490 residues: Probable cytosol aminopeptidase (490 aa).

Lysine 262 and aspartate 267 together coordinate Mn(2+). Lysine 274 is an active-site residue. The Mn(2+) site is built by aspartate 285, aspartate 344, and glutamate 346. Residue arginine 348 is part of the active site.

This sequence belongs to the peptidase M17 family. It depends on Mn(2+) as a cofactor.

It is found in the cytoplasm. It catalyses the reaction Release of an N-terminal amino acid, Xaa-|-Yaa-, in which Xaa is preferably Leu, but may be other amino acids including Pro although not Arg or Lys, and Yaa may be Pro. Amino acid amides and methyl esters are also readily hydrolyzed, but rates on arylamides are exceedingly low.. It carries out the reaction Release of an N-terminal amino acid, preferentially leucine, but not glutamic or aspartic acids.. Presumably involved in the processing and regular turnover of intracellular proteins. Catalyzes the removal of unsubstituted N-terminal amino acids from various peptides. This is Probable cytosol aminopeptidase from Mannheimia succiniciproducens (strain KCTC 0769BP / MBEL55E).